Here is a 217-residue protein sequence, read N- to C-terminus: Octanoyltransferase (217 aa).

The region spanning 32-207 is the BPL/LPL catalytic domain; that stretch reads SDSPDELWIV…TLSQLLGYQQ (176 aa). Substrate is bound by residues 71–78, 138–140, and 151–153; these read RGGQVTYH, SLG, and GLA. C169 functions as the Acyl-thioester intermediate in the catalytic mechanism.

Belongs to the LipB family.

The protein localises to the cytoplasm. It catalyses the reaction octanoyl-[ACP] + L-lysyl-[protein] = N(6)-octanoyl-L-lysyl-[protein] + holo-[ACP] + H(+). It participates in protein modification; protein lipoylation via endogenous pathway; protein N(6)-(lipoyl)lysine from octanoyl-[acyl-carrier-protein]: step 1/2. In terms of biological role, catalyzes the transfer of endogenously produced octanoic acid from octanoyl-acyl-carrier-protein onto the lipoyl domains of lipoate-dependent enzymes. Lipoyl-ACP can also act as a substrate although octanoyl-ACP is likely to be the physiological substrate. The chain is Octanoyltransferase from Shewanella sp. (strain ANA-3).